Reading from the N-terminus, the 107-residue chain is Iron-binding protein IscA (107 aa).

Fe cation is bound by residues cysteine 35, cysteine 99, and cysteine 101.

The protein belongs to the HesB/IscA family. As to quaternary structure, homodimer; may form tetramers and higher multimers. The cofactor is Fe cation.

In terms of biological role, is able to transfer iron-sulfur clusters to apo-ferredoxin. Multiple cycles of [2Fe2S] cluster formation and transfer are observed, suggesting that IscA acts catalytically. Recruits intracellular free iron so as to provide iron for the assembly of transient iron-sulfur cluster in IscU in the presence of IscS, L-cysteine and the thioredoxin reductase system TrxA/TrxB. The protein is Iron-binding protein IscA of Salmonella agona (strain SL483).